A 159-amino-acid polypeptide reads, in one-letter code: D-aminoacyl-tRNA deacylase (159 aa).

A Gly-cisPro motif, important for rejection of L-amino acids motif is present at residues 142–143; sequence GP.

Belongs to the DTD family. In terms of assembly, homodimer.

The protein resides in the cytoplasm. The enzyme catalyses glycyl-tRNA(Ala) + H2O = tRNA(Ala) + glycine + H(+). The catalysed reaction is a D-aminoacyl-tRNA + H2O = a tRNA + a D-alpha-amino acid + H(+). An aminoacyl-tRNA editing enzyme that deacylates mischarged D-aminoacyl-tRNAs. Also deacylates mischarged glycyl-tRNA(Ala), protecting cells against glycine mischarging by AlaRS. Acts via tRNA-based rather than protein-based catalysis; rejects L-amino acids rather than detecting D-amino acids in the active site. By recycling D-aminoacyl-tRNA to D-amino acids and free tRNA molecules, this enzyme counteracts the toxicity associated with the formation of D-aminoacyl-tRNA entities in vivo and helps enforce protein L-homochirality. This chain is D-aminoacyl-tRNA deacylase, found in Albidiferax ferrireducens (strain ATCC BAA-621 / DSM 15236 / T118) (Rhodoferax ferrireducens).